A 407-amino-acid chain; its full sequence is Phosphonoacetate hydrolase (407 aa).

Residues Asp-25, Thr-64, Asp-202, His-206, Asp-241, His-242, and His-368 each coordinate Zn(2+). Substrate-binding residues include Thr-64 and Asp-202. Residues His-242 and His-368 each contribute to the substrate site.

Belongs to the alkaline phosphatase family. PhnA subfamily. In terms of assembly, homodimer. Requires Zn(2+) as cofactor.

The catalysed reaction is phosphonoacetate + H2O = acetate + phosphate + H(+). Functionally, specifically hydrolyzes phosphonoacetate. Does not have activity on other organophosphonates or acetates. In Pseudomonas putida (Arthrobacter siderocapsulatus), this protein is Phosphonoacetate hydrolase.